A 366-amino-acid polypeptide reads, in one-letter code: 4-hydroxy-3-methylbut-2-en-1-yl diphosphate synthase (flavodoxin) (366 aa).

Residues cysteine 270, cysteine 273, cysteine 305, and glutamate 312 each contribute to the [4Fe-4S] cluster site.

This sequence belongs to the IspG family. Requires [4Fe-4S] cluster as cofactor.

The enzyme catalyses (2E)-4-hydroxy-3-methylbut-2-enyl diphosphate + oxidized [flavodoxin] + H2O + 2 H(+) = 2-C-methyl-D-erythritol 2,4-cyclic diphosphate + reduced [flavodoxin]. Its pathway is isoprenoid biosynthesis; isopentenyl diphosphate biosynthesis via DXP pathway; isopentenyl diphosphate from 1-deoxy-D-xylulose 5-phosphate: step 5/6. Its function is as follows. Converts 2C-methyl-D-erythritol 2,4-cyclodiphosphate (ME-2,4cPP) into 1-hydroxy-2-methyl-2-(E)-butenyl 4-diphosphate. The polypeptide is 4-hydroxy-3-methylbut-2-en-1-yl diphosphate synthase (flavodoxin) (Acidithiobacillus ferrooxidans (strain ATCC 53993 / BNL-5-31) (Leptospirillum ferrooxidans (ATCC 53993))).